Consider the following 187-residue polypeptide: MSKANLTHHFLIAAPELSDPRFEQALIYICRHDKHGALGLMVNRPLEQARVGKLLEDLDIEVTDAQVMEDLALEGGPMYPEVGFVLHTGQPEWASSFAISENVCITTSQDILKRIAAGQGVGHYQLCLGHASWGKKQLDRELANGDWLVCPADLNLLFDTPFEERWQMAADKIGVNFDYLSSDIGHA.

Belongs to the UPF0301 (AlgH) family.

The chain is UPF0301 protein Pcryo_0062 from Psychrobacter cryohalolentis (strain ATCC BAA-1226 / DSM 17306 / VKM B-2378 / K5).